The chain runs to 264 residues: Phosphate import ATP-binding protein PstB (264 aa).

The region spanning 11–250 (LKAEALSVYY…DTTEKIFDSP (240 aa)) is the ABC transporter domain. 43–50 (GPSGCGKS) lines the ATP pocket.

The protein belongs to the ABC transporter superfamily. Phosphate importer (TC 3.A.1.7) family. In terms of assembly, the complex is composed of two ATP-binding proteins (PstB), two transmembrane proteins (PstC and PstA) and a solute-binding protein (PstS).

The protein resides in the cell inner membrane. The enzyme catalyses phosphate(out) + ATP + H2O = ADP + 2 phosphate(in) + H(+). Part of the ABC transporter complex PstSACB involved in phosphate import. Responsible for energy coupling to the transport system. The protein is Phosphate import ATP-binding protein PstB of Synechococcus sp. (strain ATCC 27144 / PCC 6301 / SAUG 1402/1) (Anacystis nidulans).